A 150-amino-acid polypeptide reads, in one-letter code: MSTPFWQSKSLEHMTEEEWESLCDGCGKCCLHKLMDEDTDEIYYTNVACSWLNSKTCSCKDYPNRFTSGEECTKLTREDIDDFTWLPHTCAYRLLAENQPLPEWHPLITGSKSAMHAAGESVRNKVVYEIDVVDWEDHIQNLPDRLKPHN.

This sequence belongs to the UPF0260 family.

The protein is UPF0260 protein VIBHAR_03078 of Vibrio campbellii (strain ATCC BAA-1116).